The chain runs to 128 residues: Probable 4-amino-4-deoxy-L-arabinose-phosphoundecaprenol flippase subunit ArnF (128 aa).

Over 1–2 the chain is Cytoplasmic; it reads MG. A helical membrane pass occupies residues 3 to 23; sequence LMWGLFSVIIASAAQLSMGFA. Residues 24 to 35 lie on the Periplasmic side of the membrane; the sequence is ASHLPPMTHLWD. The helical transmembrane segment at 36-56 threads the bilayer; that stretch reads FIAALLAFGLDARILLLGLLG. Residues 57-76 lie on the Cytoplasmic side of the membrane; the sequence is YLLSVFCWYKTLHKLALSKA. The helical transmembrane segment at 77 to 97 threads the bilayer; the sequence is YALLSMSYVLVWIASMVLPGW. Topologically, residues 98 to 100 are periplasmic; the sequence is EGT. A helical membrane pass occupies residues 101-121; that stretch reads FSLKALLGVACIMSGLMLIFL. The Cytoplasmic segment spans residues 122 to 128; the sequence is PTTKQRY.

This sequence belongs to the ArnF family. In terms of assembly, heterodimer of ArnE and ArnF.

The protein resides in the cell inner membrane. It functions in the pathway bacterial outer membrane biogenesis; lipopolysaccharide biosynthesis. Functionally, translocates 4-amino-4-deoxy-L-arabinose-phosphoundecaprenol (alpha-L-Ara4N-phosphoundecaprenol) from the cytoplasmic to the periplasmic side of the inner membrane. This chain is Probable 4-amino-4-deoxy-L-arabinose-phosphoundecaprenol flippase subunit ArnF, found in Escherichia coli O45:K1 (strain S88 / ExPEC).